Here is a 383-residue protein sequence, read N- to C-terminus: 8-amino-7-oxononanoate synthase (383 aa).

Residue Arg21 coordinates substrate. Residue 108–109 (GF) participates in pyridoxal 5'-phosphate binding. His133 lines the substrate pocket. 3 residues coordinate pyridoxal 5'-phosphate: Ser179, His207, and Thr233. Lys236 is subject to N6-(pyridoxal phosphate)lysine. Thr350 provides a ligand contact to substrate.

It belongs to the class-II pyridoxal-phosphate-dependent aminotransferase family. BioF subfamily. Homodimer. It depends on pyridoxal 5'-phosphate as a cofactor.

It catalyses the reaction 6-carboxyhexanoyl-[ACP] + L-alanine + H(+) = (8S)-8-amino-7-oxononanoate + holo-[ACP] + CO2. Its pathway is cofactor biosynthesis; biotin biosynthesis. Functionally, catalyzes the decarboxylative condensation of pimeloyl-[acyl-carrier protein] and L-alanine to produce 8-amino-7-oxononanoate (AON), [acyl-carrier protein], and carbon dioxide. In Yersinia enterocolitica serotype O:8 / biotype 1B (strain NCTC 13174 / 8081), this protein is 8-amino-7-oxononanoate synthase.